The primary structure comprises 211 residues: MTRGKLITFEGPDGAGKTTVLERLVPLLQAALGQTIVTTREPGGVAIAEKIRQLILDVSHTTMDDKTELLLYIAARRQHLVEKIMPALEAGHLVLVDRFIDSSVAYQGAGRGLDKQAIQWLNHFATDGVDPDLTLYFDVPSELGLARIAQNTEREVNRLDLEQLDLHQRVRKGYLELALENPQRIVKIDASQDLESVVAAALAAIITHSQA.

An ATP-binding site is contributed by 11–18; sequence GPDGAGKT.

The protein belongs to the thymidylate kinase family.

It carries out the reaction dTMP + ATP = dTDP + ADP. Functionally, phosphorylation of dTMP to form dTDP in both de novo and salvage pathways of dTTP synthesis. In Streptococcus equi subsp. zooepidemicus (strain H70), this protein is Thymidylate kinase.